A 170-amino-acid chain; its full sequence is Large ribosomal subunit protein uL5 (170 aa).

The protein belongs to the universal ribosomal protein uL5 family. Component of the large ribosomal subunit.

The protein resides in the nucleus. It localises to the cytoplasm. Component of the ribosome, a large ribonucleoprotein complex responsible for the synthesis of proteins in the cell. The small ribosomal subunit (SSU) binds messenger RNAs (mRNAs) and translates the encoded message by selecting cognate aminoacyl-transfer RNA (tRNA) molecules. The large subunit (LSU) contains the ribosomal catalytic site termed the peptidyl transferase center (PTC), which catalyzes the formation of peptide bonds, thereby polymerizing the amino acids delivered by tRNAs into a polypeptide chain. The nascent polypeptides leave the ribosome through a tunnel in the LSU and interact with protein factors that function in enzymatic processing, targeting, and the membrane insertion of nascent chains at the exit of the ribosomal tunnel. The sequence is that of Large ribosomal subunit protein uL5 (RPL11) from Chlamydomonas reinhardtii (Chlamydomonas smithii).